Here is a 343-residue protein sequence, read N- to C-terminus: 5-amino-6-(D-ribitylamino)uracil--L-tyrosine 4-hydroxyphenyl transferase (343 aa).

One can recognise a Radical SAM core domain in the interval 39 to 268 (VTYVVNRNIN…AIARILLYPE (230 aa)). Positions 53, 57, and 60 each coordinate [4Fe-4S] cluster.

It belongs to the radical SAM superfamily. CofH family. As to quaternary structure, consists of two subunits, CofG and CofH. [4Fe-4S] cluster is required as a cofactor.

It catalyses the reaction 5-amino-6-(D-ribitylamino)uracil + L-tyrosine + S-adenosyl-L-methionine = 5-amino-5-(4-hydroxybenzyl)-6-(D-ribitylimino)-5,6-dihydrouracil + 2-iminoacetate + 5'-deoxyadenosine + L-methionine + H(+). Its pathway is cofactor biosynthesis; coenzyme F0 biosynthesis. In terms of biological role, catalyzes the radical-mediated synthesis of 5-amino-5-(4-hydroxybenzyl)-6-(D-ribitylimino)-5,6-dihydrouracil from 5-amino-6-(D-ribitylamino)uracil and L-tyrosine. The protein is 5-amino-6-(D-ribitylamino)uracil--L-tyrosine 4-hydroxyphenyl transferase of Archaeoglobus fulgidus (strain ATCC 49558 / DSM 4304 / JCM 9628 / NBRC 100126 / VC-16).